The following is a 333-amino-acid chain: Glycerol-3-phosphate dehydrogenase [NAD(P)+] (333 aa).

3 residues coordinate NADPH: Trp13, Lys33, and Lys108. Positions 108 and 138 each coordinate sn-glycerol 3-phosphate. Ser142 contacts NADPH. Sn-glycerol 3-phosphate is bound by residues Lys193, Asp246, Ser256, Arg257, and Asn258. Lys193 functions as the Proton acceptor in the catalytic mechanism. Arg257 lines the NADPH pocket. NADPH is bound by residues Val281 and Glu283.

It belongs to the NAD-dependent glycerol-3-phosphate dehydrogenase family.

It localises to the cytoplasm. The enzyme catalyses sn-glycerol 3-phosphate + NAD(+) = dihydroxyacetone phosphate + NADH + H(+). The catalysed reaction is sn-glycerol 3-phosphate + NADP(+) = dihydroxyacetone phosphate + NADPH + H(+). It functions in the pathway membrane lipid metabolism; glycerophospholipid metabolism. In terms of biological role, catalyzes the reduction of the glycolytic intermediate dihydroxyacetone phosphate (DHAP) to sn-glycerol 3-phosphate (G3P), the key precursor for phospholipid synthesis. The protein is Glycerol-3-phosphate dehydrogenase [NAD(P)+] of Bifidobacterium longum subsp. infantis (strain ATCC 15697 / DSM 20088 / JCM 1222 / NCTC 11817 / S12).